The chain runs to 284 residues: L-ribulose-5-phosphate 3-epimerase UlaE (284 aa).

This sequence belongs to the L-ribulose-5-phosphate 3-epimerase family.

It carries out the reaction L-ribulose 5-phosphate = L-xylulose 5-phosphate. The protein operates within cofactor degradation; L-ascorbate degradation; D-xylulose 5-phosphate from L-ascorbate: step 3/4. Functionally, catalyzes the isomerization of L-xylulose-5-phosphate to L-ribulose-5-phosphate. Is involved in the anaerobic L-ascorbate utilization. The chain is L-ribulose-5-phosphate 3-epimerase UlaE from Escherichia coli (strain K12 / MC4100 / BW2952).